The chain runs to 85 residues: UPF0297 protein CLL_A1175 (85 aa).

The protein belongs to the UPF0297 family.

This is UPF0297 protein CLL_A1175 from Clostridium botulinum (strain Eklund 17B / Type B).